The chain runs to 233 residues: Probable chemoreceptor glutamine deamidase CheD (233 aa).

It belongs to the CheD family.

It catalyses the reaction L-glutaminyl-[protein] + H2O = L-glutamyl-[protein] + NH4(+). Probably deamidates glutamine residues to glutamate on methyl-accepting chemotaxis receptors (MCPs), playing an important role in chemotaxis. This is Probable chemoreceptor glutamine deamidase CheD from Vibrio cholerae serotype O1 (strain ATCC 39315 / El Tor Inaba N16961).